The following is a 503-amino-acid chain: Probable cytosol aminopeptidase (503 aa).

Mn(2+)-binding residues include K270 and D275. K282 is a catalytic residue. D293, D352, and E354 together coordinate Mn(2+). R356 is an active-site residue.

Belongs to the peptidase M17 family. The cofactor is Mn(2+).

It is found in the cytoplasm. The enzyme catalyses Release of an N-terminal amino acid, Xaa-|-Yaa-, in which Xaa is preferably Leu, but may be other amino acids including Pro although not Arg or Lys, and Yaa may be Pro. Amino acid amides and methyl esters are also readily hydrolyzed, but rates on arylamides are exceedingly low.. It catalyses the reaction Release of an N-terminal amino acid, preferentially leucine, but not glutamic or aspartic acids.. Presumably involved in the processing and regular turnover of intracellular proteins. Catalyzes the removal of unsubstituted N-terminal amino acids from various peptides. The polypeptide is Probable cytosol aminopeptidase (Shigella boydii serotype 4 (strain Sb227)).